The primary structure comprises 472 residues: PEP-dependent dihydroxyacetone kinase, phosphoryl donor subunit DhaM (472 aa).

Positions 1–135 constitute a PTS EIIA type-4 domain; sequence MVNLVIVSHS…NALEAKRVQL (135 aa). Residue H9 is the Tele-phosphohistidine intermediate of the active site. One can recognise an HPr domain in the interval 156-243; that stretch reads ARSVSVVIQN…ALAAENFGEP (88 aa). The Pros-phosphohistidine intermediate role is filled by H170. The tract at residues 266–472 is PTS EI-like, N-terminal part; sequence PQPQDRISRE…DIPGKRVIRG (207 aa). H432 acts as the Tele-phosphohistidine intermediate in catalysis.

Belongs to the PEP-utilizing enzyme family. In terms of assembly, homodimer. The dihydroxyacetone kinase complex is composed of a homodimer of DhaM, a homodimer of DhaK and the subunit DhaL.

The enzyme catalyses dihydroxyacetone + phosphoenolpyruvate = dihydroxyacetone phosphate + pyruvate. In terms of biological role, component of the dihydroxyacetone kinase complex, which is responsible for the phosphoenolpyruvate (PEP)-dependent phosphorylation of dihydroxyacetone. DhaM serves as the phosphoryl donor. Is phosphorylated by phosphoenolpyruvate in an EI- and HPr-dependent reaction, and a phosphorelay system on histidine residues finally leads to phosphoryl transfer to DhaL and dihydroxyacetone. The protein is PEP-dependent dihydroxyacetone kinase, phosphoryl donor subunit DhaM of Klebsiella michiganensis (strain ATCC 8724 / DSM 4798 / JCM 20051 / NBRC 3318 / NRRL B-199 / KCTC 1686 / BUCSAV 143 / CCM 1901).